The sequence spans 231 residues: MSNTPIELKGSSFTLSVVHLHEAEPKVIHQALEDKIAQAPAFLKHAPVVLNVSALEAPVNWSAMHKAVSATGLRVIGVSGCKDAQLKAEIEKMGLPILTEGKEKAPRPAPAPQAPAQNTTPVTKTRLIDTPVRSGQRIYAPQCDLIVTSHVSAGAELIADGNIHVYGMMRGRALAGASGDRETQIFCTNLMAELVSIAGEYWLSDQIPAEFYGKAARLQLVENALTVQPLN.

Residues 102–125 form a disordered region; sequence KEKAPRPAPAPQAPAQNTTPVTKT.

It belongs to the MinC family. As to quaternary structure, interacts with MinD and FtsZ.

In terms of biological role, cell division inhibitor that blocks the formation of polar Z ring septums. Rapidly oscillates between the poles of the cell to destabilize FtsZ filaments that have formed before they mature into polar Z rings. Prevents FtsZ polymerization. In Escherichia coli O6:K15:H31 (strain 536 / UPEC), this protein is Probable septum site-determining protein MinC.